We begin with the raw amino-acid sequence, 162 residues long: Ribosomal RNA large subunit methyltransferase H (162 aa).

Residues leucine 78, glycine 109, and leucine 128–leucine 133 contribute to the S-adenosyl-L-methionine site.

The protein belongs to the RNA methyltransferase RlmH family. In terms of assembly, homodimer.

The protein resides in the cytoplasm. The catalysed reaction is pseudouridine(1915) in 23S rRNA + S-adenosyl-L-methionine = N(3)-methylpseudouridine(1915) in 23S rRNA + S-adenosyl-L-homocysteine + H(+). Functionally, specifically methylates the pseudouridine at position 1915 (m3Psi1915) in 23S rRNA. The protein is Ribosomal RNA large subunit methyltransferase H of Psychrobacter cryohalolentis (strain ATCC BAA-1226 / DSM 17306 / VKM B-2378 / K5).